Consider the following 506-residue polypeptide: 2-isopropylmalate synthase (506 aa).

In terms of domain architecture, Pyruvate carboxyltransferase spans 4–266 (ILFMDTTLRD…EPSITLKEIK (263 aa)). Aspartate 13, histidine 201, histidine 203, and asparagine 237 together coordinate Mn(2+). The segment at 390–506 (NITQLQVHFV…KLKSFIQLVK (117 aa)) is regulatory domain.

It belongs to the alpha-IPM synthase/homocitrate synthase family. LeuA type 1 subfamily. Homodimer. Mn(2+) is required as a cofactor.

Its subcellular location is the cytoplasm. It catalyses the reaction 3-methyl-2-oxobutanoate + acetyl-CoA + H2O = (2S)-2-isopropylmalate + CoA + H(+). Its pathway is amino-acid biosynthesis; L-leucine biosynthesis; L-leucine from 3-methyl-2-oxobutanoate: step 1/4. In terms of biological role, catalyzes the condensation of the acetyl group of acetyl-CoA with 3-methyl-2-oxobutanoate (2-ketoisovalerate) to form 3-carboxy-3-hydroxy-4-methylpentanoate (2-isopropylmalate). The chain is 2-isopropylmalate synthase from Bacillus thuringiensis subsp. konkukian (strain 97-27).